The sequence spans 142 residues: Large ribosomal subunit protein uL13 (142 aa).

Belongs to the universal ribosomal protein uL13 family. Part of the 50S ribosomal subunit.

Functionally, this protein is one of the early assembly proteins of the 50S ribosomal subunit, although it is not seen to bind rRNA by itself. It is important during the early stages of 50S assembly. The protein is Large ribosomal subunit protein uL13 of Treponema pallidum (strain Nichols).